The chain runs to 265 residues: 3-methyl-2-oxobutanoate hydroxymethyltransferase (265 aa).

Positions 45 and 84 each coordinate Mg(2+). Residues 45–46, Asp-84, and Lys-112 each bind 3-methyl-2-oxobutanoate; that span reads DS. Glu-114 provides a ligand contact to Mg(2+). Glu-181 serves as the catalytic Proton acceptor.

It belongs to the PanB family. As to quaternary structure, homodecamer; pentamer of dimers. Mg(2+) serves as cofactor.

It is found in the cytoplasm. The enzyme catalyses 3-methyl-2-oxobutanoate + (6R)-5,10-methylene-5,6,7,8-tetrahydrofolate + H2O = 2-dehydropantoate + (6S)-5,6,7,8-tetrahydrofolate. Its pathway is cofactor biosynthesis; (R)-pantothenate biosynthesis; (R)-pantoate from 3-methyl-2-oxobutanoate: step 1/2. Its function is as follows. Catalyzes the reversible reaction in which hydroxymethyl group from 5,10-methylenetetrahydrofolate is transferred onto alpha-ketoisovalerate to form ketopantoate. This chain is 3-methyl-2-oxobutanoate hydroxymethyltransferase, found in Yersinia enterocolitica serotype O:8 / biotype 1B (strain NCTC 13174 / 8081).